Reading from the N-terminus, the 396-residue chain is Elongation factor Tu (396 aa).

In terms of domain architecture, tr-type G spans 10–206; the sequence is KPHCNIGTIG…NVDEYIPQPE (197 aa). The segment at 19–26 is G1; the sequence is GHVDHGKT. GTP is bound at residue 19-26; the sequence is GHVDHGKT. Thr-26 contacts Mg(2+). A G2 region spans residues 60 to 64; it reads GITIS. A G3 region spans residues 81–84; the sequence is DCPG. GTP contacts are provided by residues 81–85 and 136–139; these read DCPGH and NKCD. Positions 136–139 are G4; that stretch reads NKCD. Residues 174–176 are G5; it reads SAL.

The protein belongs to the TRAFAC class translation factor GTPase superfamily. Classic translation factor GTPase family. EF-Tu/EF-1A subfamily. Monomer.

The protein resides in the cytoplasm. It catalyses the reaction GTP + H2O = GDP + phosphate + H(+). In terms of biological role, GTP hydrolase that promotes the GTP-dependent binding of aminoacyl-tRNA to the A-site of ribosomes during protein biosynthesis. This chain is Elongation factor Tu, found in Bradyrhizobium diazoefficiens (strain JCM 10833 / BCRC 13528 / IAM 13628 / NBRC 14792 / USDA 110).